Reading from the N-terminus, the 163-residue chain is Putative pre-16S rRNA nuclease (163 aa).

This sequence belongs to the YqgF nuclease family.

It is found in the cytoplasm. Could be a nuclease involved in processing of the 5'-end of pre-16S rRNA. This Rhizobium leguminosarum bv. trifolii (strain WSM2304) protein is Putative pre-16S rRNA nuclease.